Consider the following 345-residue polypeptide: Protein D345L (345 aa).

It belongs to the asfivirus D345L family. As to quaternary structure, interacts with IKKA/CHUK and IKBKB.

Its subcellular location is the host cytoplasm. Plays a role in the negative regulation of host NF-kappa-B signaling pathway. Mechanistically, recruits host IKKA/CHUK and IKBKB to suppress their kinase activity towards NFKBIA. The chain is Protein D345L from African swine fever virus (strain Badajoz 1971 Vero-adapted) (Ba71V).